We begin with the raw amino-acid sequence, 441 residues long: Amino-acid acetyltransferase (441 aa).

The 140-residue stretch at 295 to 434 (EQVRRATIND…QELYNYQRRS (140 aa)) folds into the N-acetyltransferase domain.

It belongs to the acetyltransferase family. ArgA subfamily. Homohexamer.

The protein localises to the cytoplasm. The catalysed reaction is L-glutamate + acetyl-CoA = N-acetyl-L-glutamate + CoA + H(+). Its pathway is amino-acid biosynthesis; L-arginine biosynthesis; N(2)-acetyl-L-ornithine from L-glutamate: step 1/4. This chain is Amino-acid acetyltransferase, found in Yersinia enterocolitica serotype O:8 / biotype 1B (strain NCTC 13174 / 8081).